The primary structure comprises 508 residues: Photosystem II CP47 reaction center protein (508 aa).

The next 6 membrane-spanning stretches (helical) occupy residues 21-36 (AVHL…WAGS), 101-115 (IVLS…IWHW), 140-156 (GIHL…FGAF), 203-218 (IAAG…FHLS), 237-252 (VLSS…AFVV), and 457-472 (TFAL…HGAR).

The protein belongs to the PsbB/PsbC family. PsbB subfamily. As to quaternary structure, PSII is composed of 1 copy each of membrane proteins PsbA, PsbB, PsbC, PsbD, PsbE, PsbF, PsbH, PsbI, PsbJ, PsbK, PsbL, PsbM, PsbT, PsbX, PsbY, PsbZ, Psb30/Ycf12, at least 3 peripheral proteins of the oxygen-evolving complex and a large number of cofactors. It forms dimeric complexes. The cofactor is Binds multiple chlorophylls. PSII binds additional chlorophylls, carotenoids and specific lipids..

The protein localises to the plastid. Its subcellular location is the chloroplast thylakoid membrane. Functionally, one of the components of the core complex of photosystem II (PSII). It binds chlorophyll and helps catalyze the primary light-induced photochemical processes of PSII. PSII is a light-driven water:plastoquinone oxidoreductase, using light energy to abstract electrons from H(2)O, generating O(2) and a proton gradient subsequently used for ATP formation. In Marchantia polymorpha (Common liverwort), this protein is Photosystem II CP47 reaction center protein.